Consider the following 612-residue polypeptide: Protein MUK1 (612 aa).

The segment covering E40–C50 has biased composition (basic and acidic residues). The tract at residues E40–K66 is disordered. Residues N55–K66 are compositionally biased toward polar residues. 4 positions are modified to phosphoserine: S67, S163, S185, and S245. A VPS9 domain is found at T273–S414. A disordered region spans residues I494–R560. Over residues N503–N517 the composition is skewed to low complexity. Residues I518 to L529 are compositionally biased toward polar residues. Residues S530–S542 are compositionally biased toward basic and acidic residues. The span at R543 to S554 shows a compositional bias: low complexity.

It is found in the cytoplasm. Functionally, putative GTPase-activating protein. This Saccharomyces cerevisiae (strain ATCC 204508 / S288c) (Baker's yeast) protein is Protein MUK1 (MUK1).